A 122-amino-acid polypeptide reads, in one-letter code: Large ribosomal subunit protein uL14 (122 aa).

This sequence belongs to the universal ribosomal protein uL14 family. Part of the 50S ribosomal subunit. Forms a cluster with proteins L3 and L19. In the 70S ribosome, L14 and L19 interact and together make contacts with the 16S rRNA in bridges B5 and B8.

In terms of biological role, binds to 23S rRNA. Forms part of two intersubunit bridges in the 70S ribosome. This Pediococcus pentosaceus (strain ATCC 25745 / CCUG 21536 / LMG 10740 / 183-1w) protein is Large ribosomal subunit protein uL14.